A 552-amino-acid chain; its full sequence is Chaperonin GroEL (552 aa).

Residues 30 to 33, Lys51, 87 to 91, Gly415, 480 to 482, and Asp496 contribute to the ATP site; these read TLGP, DGTTT, and NAA.

Belongs to the chaperonin (HSP60) family. As to quaternary structure, forms a cylinder of 14 subunits composed of two heptameric rings stacked back-to-back. Interacts with the co-chaperonin GroES.

It is found in the cytoplasm. The enzyme catalyses ATP + H2O + a folded polypeptide = ADP + phosphate + an unfolded polypeptide.. Its function is as follows. Together with its co-chaperonin GroES, plays an essential role in assisting protein folding. The GroEL-GroES system forms a nano-cage that allows encapsulation of the non-native substrate proteins and provides a physical environment optimized to promote and accelerate protein folding. This chain is Chaperonin GroEL, found in Coxiella burnetii (strain RSA 493 / Nine Mile phase I).